Reading from the N-terminus, the 376-residue chain is Chaperone protein DnaJ (376 aa).

Positions 5 to 70 (DYYEILGVSK…QKRAAYDQYG (66 aa)) constitute a J domain. The segment at 131–209 (GVTKEIRIPT…CHGHGRVERS (79 aa)) adopts a CR-type zinc-finger fold. Residues Cys144, Cys147, Cys161, Cys164, Cys183, Cys186, Cys197, and Cys200 each contribute to the Zn(2+) site. CXXCXGXG motif repeat units follow at residues 144–151 (CDVCHGSG), 161–168 (CPTCHGSG), 183–190 (CPHCQGRG), and 197–204 (CNKCHGHG).

This sequence belongs to the DnaJ family. Homodimer. The cofactor is Zn(2+).

It localises to the cytoplasm. Functionally, participates actively in the response to hyperosmotic and heat shock by preventing the aggregation of stress-denatured proteins and by disaggregating proteins, also in an autonomous, DnaK-independent fashion. Unfolded proteins bind initially to DnaJ; upon interaction with the DnaJ-bound protein, DnaK hydrolyzes its bound ATP, resulting in the formation of a stable complex. GrpE releases ADP from DnaK; ATP binding to DnaK triggers the release of the substrate protein, thus completing the reaction cycle. Several rounds of ATP-dependent interactions between DnaJ, DnaK and GrpE are required for fully efficient folding. Also involved, together with DnaK and GrpE, in the DNA replication of plasmids through activation of initiation proteins. This is Chaperone protein DnaJ from Shigella flexneri serotype 5b (strain 8401).